Reading from the N-terminus, the 84-residue chain is Large ribosomal subunit protein bL27 (84 aa).

The disordered stretch occupies residues methionine 1–lysine 25.

Belongs to the bacterial ribosomal protein bL27 family.

In Sulfurovum sp. (strain NBC37-1), this protein is Large ribosomal subunit protein bL27.